A 363-amino-acid polypeptide reads, in one-letter code: Peroxisomal (S)-2-hydroxyacid oxidase GLO3 (363 aa).

The FMN hydroxy acid dehydrogenase domain maps to 1–357 (MDQIVNVDEF…TRNHVRTENE (357 aa)). FMN is bound by residues 78-80 (PTG), serine 107, 128-130 (QIY), and threonine 156. Tyrosine 130 lines the a 2-oxocarboxylate pocket. Position 165 (arginine 165) interacts with a 2-oxocarboxylate. 2 residues coordinate FMN: lysine 228 and serine 250. The active-site Proton acceptor is the histidine 252. Position 255 (arginine 255) interacts with a 2-oxocarboxylate. FMN is bound by residues 283–287 (DGGVR) and 306–307 (GR). The Microbody targeting signal motif lies at 361–363 (SML).

This sequence belongs to the FMN-dependent alpha-hydroxy acid dehydrogenase family. In terms of assembly, homotetramer. The cofactor is FMN.

The protein localises to the peroxisome. The catalysed reaction is a (2S)-2-hydroxycarboxylate + O2 = a 2-oxocarboxylate + H2O2. It catalyses the reaction 2-hydroxy-4-methylpentanoate + O2 = 4-methyl-2-oxopentanoate + H2O2. It carries out the reaction 2-hydroxyhexanoate + O2 = 2-oxohexanoate + H2O2. The enzyme catalyses 2-hydroxyoctanoate + O2 = 2-oxooctanoate + H2O2. Functionally, oxidase that catalyzes the oxidation of a broad range of 2-hydroxyacids to the corresponding 2-oxoacids, with a reduction of O2 to H2O2. Displays the highest activity with leucic acid (2-hydroxy-4-methylpentanoate) and has intermediate activity with 2-hydroxyhexanoate and 2-hydroxyoctanote. Shows lower activity with 2-hydroxydodecanoate, valic acid, and isoleucic acid and extremely low activity with glycolate and L-lactate. Cannot use 2-hydroxyhexadecanoate or D-lactate as substrates. May be involved in the conversion or degradation of 2-hydroxyacids produced during the metabolism of fatty acids or amino acids. This is Peroxisomal (S)-2-hydroxyacid oxidase GLO3 (GLO3) from Arabidopsis thaliana (Mouse-ear cress).